The sequence spans 1564 residues: NACHT domain- and WD repeat-containing protein 1 (1564 aa).

The NACHT domain maps to 335-661; sequence TPLVLFGPPG…LLAIAHRQLV (327 aa). An ATP-binding site is contributed by 341–348; sequence GPPGIGKT. 14 WD repeats span residues 866–905, 908–947, 956–994, 998–1037, 1044–1082, 1083–1121, 1126–1165, 1167–1207, 1212–1251, 1253–1290, 1291–1327, 1338–1376, 1380–1418, and 1425–1462; these read GCHK…VIHM, GHTG…EKFT, PAEP…PVFH, DASD…LQGK, KEET…LLEK, LPDA…RRFM, EHED…TLLD, LEGV…RSRV, LDRT…EQDS, DTSS…RQDV, ICIP…VLDI, GPRY…LYEC, KAFP…WDLQ, and EMSY…VWSV.

May interact with HSP90AA1, HSP90AB1 and BAG2. As to expression, expressed at highest levels in prostate, followed by testis, retina, trachea and optic nerve. Also detected in brain, epididymis, lung, vagina and pituitary. In the prostate, tends to be up-regulated during malignant progression compared to normal epithelium (at protein level).

Its subcellular location is the cytoplasm. The protein localises to the cytosol. Functionally, may play a role in the control of androgen receptor (AR) protein steady-state levels. In Homo sapiens (Human), this protein is NACHT domain- and WD repeat-containing protein 1 (NWD1).